A 666-amino-acid polypeptide reads, in one-letter code: Neurexin-2-beta (666 aa).

Residues 1–10 show a composition bias toward gly residues; the sequence is MPPGGSGPGG. The segment at 1 to 30 is disordered; sequence MPPGGSGPGGCPRRPPALAGPLPPPPPPPP. The signal sequence occupies residues 1–50; that stretch reads MPPGGSGPGGCPRRPPALAGPLPPPPPPPPPPLLPLLPLLLLLLLGAAEG. The span at 21-30 shows a compositional bias: pro residues; it reads PLPPPPPPPP. The Extracellular portion of the chain corresponds to 51-590; sequence ARVSSSLSTT…EVIRESSSTT (540 aa). A Laminin G-like domain is found at 91-299; the sequence is TTYIFGKGGA…HLRLVGEGPS (209 aa). 2 residues coordinate Ca(2+): Asp143 and Val160. A glycan (N-linked (GlcNAc...) asparagine) is linked at Asn190. Positions 242 and 244 each coordinate Ca(2+). Residues 327-346 are disordered; sequence ATTTTRRGRSPTLRDSTTQN. Residue Ser354 is glycosylated (O-linked (Xyl...) (heparan sulfate) serine). Disordered regions lie at residues 412 to 443 and 479 to 580; these read ATQD…CEEP and TLLS…PGAV. A helical membrane pass occupies residues 591–611; sequence GMVVGIVAAAALCILILLYAM. Topologically, residues 612 to 666 are cytoplasmic; it reads YKYRNRDEGSYQVDQSRNYISNSAQSNGAVVKEKAPAAPKTPSKAKKNKDKEYYV. The segment at 633–666 is disordered; it reads NSAQSNGAVVKEKAPAAPKTPSKAKKNKDKEYYV.

Belongs to the neurexin family. In terms of assembly, interacts (via cytoplasmic C-terminal region) with CASK. Specific isoforms bind alpha-dystroglycan and neuroligins NLGN1, NLGN2 and NLGN3. Interacts with CBLN1, CBLN2 and, less avidly, with CBLN4. Interacts with CLSTN3. O-glycosylated; contains heparan sulfate. Heparan sulfate attachment is required for synapse development by mediating interactions with neuroligins.

It is found in the presynaptic cell membrane. Functionally, neuronal cell surface protein that may be involved in cell recognition and cell adhesion. This chain is Neurexin-2-beta (NRXN2), found in Homo sapiens (Human).